A 115-amino-acid chain; its full sequence is Transcription initiation factor IIA subunit 2 (115 aa).

Belongs to the TFIIA subunit 2 family. In terms of assembly, TFIIA is a heterodimer of the large unprocessed subunit 1 and a small subunit gamma.

It is found in the nucleus. Its function is as follows. TFIIA is a component of the transcription machinery of RNA polymerase II and plays an important role in transcriptional activation. TFIIA in a complex with tbp mediates transcriptional activity. This chain is Transcription initiation factor IIA subunit 2 (gtf2a2), found in Dictyostelium discoideum (Social amoeba).